Reading from the N-terminus, the 305-residue chain is PI-PLC X domain-containing protein 1 (305 aa).

The first 24 residues, 1-24 (MSMSTLRHFLWLGALLLATIQVSA), serve as a signal peptide directing secretion. Residues 25–189 (LPTAQDLICN…RLIVFVDSKA (165 aa)) form the PI-PLC X-box domain. Residues His-53 and His-97 contribute to the active site. A glycan (N-linked (GlcNAc...) asparagine) is linked at Asn-237.

The protein localises to the secreted. In Arthroderma benhamiae (strain ATCC MYA-4681 / CBS 112371) (Trichophyton mentagrophytes), this protein is PI-PLC X domain-containing protein 1.